The chain runs to 1207 residues: RNA-binding protein 20 (1207 aa).

The interval 1 to 58 is disordered; sequence MVLAAAMSQDADPSGPEQPDRDACIVPGVQGPPAPQGQQGMQPLPPPLPPPPQPQSSL. Residues 43 to 54 show a composition bias toward pro residues; sequence PLPPPLPPPPQP. Residues 412 to 446 form a U1-type zinc finger; sequence HLPHICSICDKKVFDLKDWELHVKGKLHAQKCLLF. The region spanning 521 to 596 is the RRM domain; that stretch reads RVVHICNLPE…EKLLIRMSTR (76 aa). Residues 625–637 show a composition bias toward basic and acidic residues; that stretch reads LREADRYGPERPR. Disordered regions lie at residues 625–686, 722–896, and 951–1110; these read LREA…NGED, EKYL…MEEL, and QGET…AELK. An RS region spans residues 631-650; sequence YGPERPRSRSPMSRSLSPRS. Phosphoserine is present on residues Ser638, Ser640, Ser643, Ser645, and Ser652. Residues 639–650 are compositionally biased toward low complexity; it reads RSPMSRSLSPRS. The segment covering 668 to 686 has biased composition (basic and acidic residues); that stretch reads YAWRDEDRETVPRRENGED. Residue Ser729 is modified to Phosphoserine. 3 stretches are compositionally biased toward basic and acidic residues: residues 740–759, 772–789, and 796–836; these read KGRE…DKHP, RKEE…PEDS, and EPKV…RGAE. Ser789 carries the phosphoserine modification. Residues 839 to 848 are compositionally biased toward acidic residues; that stretch reads AGTEEQEGME. Phosphoserine is present on residues Ser853 and Ser864. A compositionally biased stretch (polar residues) spans 853–863; sequence SVGTQQEGTES. The span at 867-876 shows a compositional bias: basic and acidic residues; it reads ENTRTKKGQD. Phosphoserine occurs at positions 879, 881, and 963. Residues 970 to 979 are compositionally biased toward polar residues; sequence VPSTSTSCPN. The residue at position 999 (Ser999) is a Phosphoserine. Residues 1011–1022 show a composition bias toward basic and acidic residues; sequence YEKEARGAEGSD. Ser1034, Ser1046, Ser1057, Ser1066, Ser1078, Ser1096, and Ser1101 each carry phosphoserine. A compositionally biased stretch (basic and acidic residues) spans 1050-1072; that stretch reads DDCKARGSPEDGPHEVSPLEEKA. Polar residues predominate over residues 1073-1102; sequence SPTTESDLQSQACQENSRYTETRSLNSRSP. The Matrin-type zinc finger occupies 1141 to 1172; that stretch reads FYCKLCGLFYTSEEAAKVSHCRSTVHYRNLQK. Residues 1181–1207 form a disordered region; sequence GLKETEGVDSPSPERSGIGPHLERKKL. Residues Ser1190 and Ser1192 each carry the phosphoserine modification.

In terms of assembly, associates with components of the U1 and U2 U1 small nuclear ribonucleoprotein complexes. Post-translationally, phosphorylation regulates the subcellular localization. Phosphorylation of Ser-638 and Ser-640 in the RS (arginine/serine-rich) region promotes nuclear localization of the protein. In contrast, phosphorylation of the C-terminal disordered region promotes localization to cytoplasmic ribonucleoprotein granules.

The protein resides in the nucleus. Its subcellular location is the cytoplasm. The protein localises to the cytoplasmic ribonucleoprotein granule. Functionally, RNA-binding protein that acts as a regulator of mRNA splicing of a subset of genes encoding key structural proteins involved in cardiac development, such as TTN (Titin), CACNA1C, CAMK2D or PDLIM5/ENH. Acts as a repressor of mRNA splicing: specifically binds the 5'UCUU-3' motif that is predominantly found within intronic sequences of pre-mRNAs, leading to the exclusion of specific exons in target transcripts. RBM20-mediated exon skipping is hormone-dependent and is essential for TTN isoform transition in both cardiac and skeletal muscles. RBM20-mediated exon skipping of TTN provides substrates for the formation of circular RNA (circRNAs) from the TTN transcripts. Together with RBM24, promotes the expression of short isoforms of PDLIM5/ENH in cardiomyocytes. This Rattus norvegicus (Rat) protein is RNA-binding protein 20.